Reading from the N-terminus, the 906-residue chain is Protein translocase subunit SecA (906 aa).

ATP is bound by residues Gln86, 104-108 (GEGKT), and Asp499. The interval 863-887 (PVVSRIDPKDRNPDDPTSWGRVSRN) is disordered. Residues Cys890, Cys892, Cys901, and His902 each contribute to the Zn(2+) site.

It belongs to the SecA family. As to quaternary structure, monomer and homodimer. Part of the essential Sec protein translocation apparatus which comprises SecA, SecYEG and auxiliary proteins SecDF-YajC and YidC. It depends on Zn(2+) as a cofactor.

It localises to the cell inner membrane. It is found in the cytoplasm. It catalyses the reaction ATP + H2O + cellular proteinSide 1 = ADP + phosphate + cellular proteinSide 2.. Its function is as follows. Part of the Sec protein translocase complex. Interacts with the SecYEG preprotein conducting channel. Has a central role in coupling the hydrolysis of ATP to the transfer of proteins into and across the cell membrane, serving both as a receptor for the preprotein-SecB complex and as an ATP-driven molecular motor driving the stepwise translocation of polypeptide chains across the membrane. The chain is Protein translocase subunit SecA from Rickettsia rickettsii (strain Iowa).